Here is a 283-residue protein sequence, read N- to C-terminus: MSGRRSFFASKKPSRSSNPFDSDSDDGGREQRPARASSVPPPADQRGSLFGGGDGFSASSAAARSRYRNDFRDTGGVEAQSVQELEGYAAYKAEETTQRVQGCVRIAEEMRDTASKSLVTIHQQGQQITRTHMMTLDIDQDLSRSEKLLGDLGGIFSKKWKPKKNGEIRGPMLTRDDSFIRKGSHLEQRHKLGLSDHPPQSNARQFHSEPTSALQKVEMEKAKQDDGLSDLSNILTELKGMAVDMGTEIDRQTKALGDSEKDYDELNFRIKGANTRARRLLGK.

Disordered regions lie at residues 1 to 64 (MSGR…AAAR) and 192 to 212 (LGLSDHPPQSNARQFHSEPTS). Positions 198–212 (PPQSNARQFHSEPTS) are enriched in polar residues. The region spanning 218-280 (EMEKAKQDDG…KGANTRARRL (63 aa)) is the t-SNARE coiled-coil homology domain.

The protein belongs to the SNAP-25 family. As to quaternary structure, interacts with SYP121. As to expression, expressed in roots, culms and leaves.

It localises to the membrane. Functionally, t-SNARE involved in diverse vesicle trafficking and membrane fusion processes. May be involved in resistance to the rice blast fungus Magnaporthe oryzae. May contribute to host resistance to rice blast through interaction with SYP121. The protein is SNAP25 homologous protein SNAP32 of Oryza sativa subsp. japonica (Rice).